Consider the following 139-residue polypeptide: D-ribose pyranase (139 aa).

The Proton donor role is filled by H20. Residues D28, H106, and 128 to 130 (YAN) each bind substrate.

Belongs to the RbsD / FucU family. RbsD subfamily. As to quaternary structure, homodecamer.

The protein localises to the cytoplasm. It carries out the reaction beta-D-ribopyranose = beta-D-ribofuranose. It functions in the pathway carbohydrate metabolism; D-ribose degradation; D-ribose 5-phosphate from beta-D-ribopyranose: step 1/2. Functionally, catalyzes the interconversion of beta-pyran and beta-furan forms of D-ribose. In Escherichia coli O81 (strain ED1a), this protein is D-ribose pyranase.